Consider the following 602-residue polypeptide: Potassium voltage-gated channel subfamily A member 5 (602 aa).

The tract at residues 1 to 202 is tetramerization domain; sequence MEISLVPLEN…FYQLGDEAME (202 aa). Topologically, residues 1 to 238 are cytoplasmic; sequence MEISLVPLEN…LIFEYPESSG (238 aa). Residues 58-107 form a disordered region; that stretch reads EDANQGGRPLPPMAQELPQPRRLSAEDEEGEGDPGLGTVEEDQAPQDAGS. The residue at position 81 (Ser81) is a Phosphoserine; by CK2 and PKA. Lys212 is covalently cross-linked (Glycyl lysine isopeptide (Lys-Gly) (interchain with G-Cter in SUMO)). Residues 239–260 traverse the membrane as a helical segment; sequence SARAIAIVSVLVILISIITFCL. At 261–314 the chain is on the extracellular side; that stretch reads ETLPEFRDERELLRHPPVPPQPPAPAPGINGSVSGALSSGPTVAPLLPRTLADP. A helical membrane pass occupies residues 315 to 336; it reads FFIVETTCVIWFTFELLVRFFA. Cys337 is lipidated: S-palmitoyl cysteine. Over 337–347 the chain is Cytoplasmic; it reads CPSKAEFSRNI. A helical membrane pass occupies residues 348–368; that stretch reads MNIIDVVAIFPYFITLGTELA. Residues 369–384 are Extracellular-facing; sequence EQQPGGGGQNGQQAMS. Residues 385–405 form a helical; Voltage-sensor membrane-spanning segment; that stretch reads LAILRVIRLVRVFRIFKLSRH. At 406–420 the chain is on the cytoplasmic side; that stretch reads SKGLQILGKTLQASM. Residues 407 to 420 are S4-S5 linker; it reads KGLQILGKTLQASM. The helical transmembrane segment at 421–442 threads the bilayer; sequence RELGLLIFFLFIGVILFSSAVY. Residues 443-456 lie on the Extracellular side of the membrane; sequence FAEADNHGSHFSSI. Residues 457-468 constitute an intramembrane region (helical); it reads PDAFWWAVVTMT. The short motif at 469–474 is the Selectivity filter element; the sequence is TVGYGD. An intramembrane segment occupies 469 to 476; sequence TVGYGDMR. Residues 477-483 are Extracellular-facing; sequence PITVGGK. Residues 484–512 form a helical membrane-spanning segment; sequence IVGSLCAIAGVLTIALPVPVIVSNFNYFY. The Cytoplasmic segment spans residues 513-602; sequence HRETDHEEQA…CLDTSRETDL (90 aa). Positions 523-536 are enriched in basic and acidic residues; sequence ALKEEQGNQRRESG. The interval 523–543 is disordered; that stretch reads ALKEEQGNQRRESGLDTGGQR. Lys525 participates in a covalent cross-link: Glycyl lysine isopeptide (Lys-Gly) (interchain with G-Cter in SUMO). Residues Ser535, Ser546, and Ser569 each carry the phosphoserine; by PKA modification. The PDZ-binding motif lies at 600–602; it reads TDL.

The protein belongs to the potassium channel family. A (Shaker) (TC 1.A.1.2) subfamily. Kv1.5/KCNA5 sub-subfamily. As to quaternary structure, homotetramer and heterotetramer of potassium channel proteins. Interacts with DLG1, which enhances channel currents. Forms a ternary complex with DLG1 and CAV3. Interacts with KCNAB1. Interacts with UBE2I. Interacts with XIRP2; the interaction is required for normal action potential configuration in the heart. Post-translationally, glycosylated. In terms of processing, sumoylated on Lys-212, and Lys-525, preferentially with SUMO3. Sumoylation regulates the voltage sensitivity of the channel. In terms of tissue distribution, expressed equally in atrium, ventricle, aorta and skeletal muscle. Weaker expression in brain.

The protein resides in the cell membrane. It catalyses the reaction K(+)(in) = K(+)(out). Voltage-gated potassium channel that mediates transmembrane potassium transport in excitable membranes. Forms tetrameric potassium-selective channels through which potassium ions pass in accordance with their electrochemical gradient. The channel alternates between opened and closed conformations in response to the voltage difference across the membrane. Can form functional homotetrameric channels and heterotetrameric channels that contain variable proportions of KCNA1, KCNA2, KCNA4, KCNA5, and possibly other family members as well; channel properties depend on the type of alpha subunits that are part of the channel. Channel properties are modulated by cytoplasmic beta subunits that regulate the subcellular location of the alpha subunits and promote rapid inactivation. Homotetrameric channels display rapid activation and slow inactivation. Required for normal electrical conduction including formation of the infranodal ventricular conduction system and normal action potential configuration, as a result of its interaction with XIRP2. May play a role in regulating the secretion of insulin in normal pancreatic islets. The chain is Potassium voltage-gated channel subfamily A member 5 (Kcna5) from Rattus norvegicus (Rat).